The following is a 314-amino-acid chain: Methionyl-tRNA formyltransferase (314 aa).

A (6S)-5,6,7,8-tetrahydrofolate-binding site is contributed by 112 to 115 (SLLP).

The protein belongs to the Fmt family.

The enzyme catalyses L-methionyl-tRNA(fMet) + (6R)-10-formyltetrahydrofolate = N-formyl-L-methionyl-tRNA(fMet) + (6S)-5,6,7,8-tetrahydrofolate + H(+). Attaches a formyl group to the free amino group of methionyl-tRNA(fMet). The formyl group appears to play a dual role in the initiator identity of N-formylmethionyl-tRNA by promoting its recognition by IF2 and preventing the misappropriation of this tRNA by the elongation apparatus. The protein is Methionyl-tRNA formyltransferase of Aeromonas hydrophila subsp. hydrophila (strain ATCC 7966 / DSM 30187 / BCRC 13018 / CCUG 14551 / JCM 1027 / KCTC 2358 / NCIMB 9240 / NCTC 8049).